Consider the following 486-residue polypeptide: tRNA sulfurtransferase (486 aa).

Residues 61 to 165 (AILIDVLGRI…NDHMMLIKAR (105 aa)) form the THUMP domain. Residues 183 to 184 (LI), Lys265, Gly287, and Gln296 each bind ATP. Cys344 and Cys456 form a disulfide bridge. Positions 404-481 (LSANDVILDI…NGFANVRVFA (78 aa)) constitute a Rhodanese domain. Cys456 serves as the catalytic Cysteine persulfide intermediate.

It belongs to the ThiI family.

The protein localises to the cytoplasm. The enzyme catalyses [ThiI sulfur-carrier protein]-S-sulfanyl-L-cysteine + a uridine in tRNA + 2 reduced [2Fe-2S]-[ferredoxin] + ATP + H(+) = [ThiI sulfur-carrier protein]-L-cysteine + a 4-thiouridine in tRNA + 2 oxidized [2Fe-2S]-[ferredoxin] + AMP + diphosphate. It catalyses the reaction [ThiS sulfur-carrier protein]-C-terminal Gly-Gly-AMP + S-sulfanyl-L-cysteinyl-[cysteine desulfurase] + AH2 = [ThiS sulfur-carrier protein]-C-terminal-Gly-aminoethanethioate + L-cysteinyl-[cysteine desulfurase] + A + AMP + 2 H(+). It participates in cofactor biosynthesis; thiamine diphosphate biosynthesis. In terms of biological role, catalyzes the ATP-dependent transfer of a sulfur to tRNA to produce 4-thiouridine in position 8 of tRNAs, which functions as a near-UV photosensor. Also catalyzes the transfer of sulfur to the sulfur carrier protein ThiS, forming ThiS-thiocarboxylate. This is a step in the synthesis of thiazole, in the thiamine biosynthesis pathway. The sulfur is donated as persulfide by IscS. The protein is tRNA sulfurtransferase of Mannheimia succiniciproducens (strain KCTC 0769BP / MBEL55E).